The primary structure comprises 257 residues: UPF0246 protein CLH_2088 (257 aa).

This sequence belongs to the UPF0246 family.

The sequence is that of UPF0246 protein CLH_2088 from Clostridium botulinum (strain Alaska E43 / Type E3).